The following is a 417-amino-acid chain: Neuropeptide FF receptor 2 (417 aa).

Topologically, residues 1–45 (MGKRWDSNSSGSWDHIWSGNDTQHPWYSDINITYMNYYLHQPHVT) are extracellular. N-linked (GlcNAc...) asparagine glycosylation is found at N8, N20, and N31. A helical transmembrane segment spans residues 46–66 (AVFISSYFLIFFLCMVGNTVV). The Cytoplasmic portion of the chain corresponds to 67–82 (CFVVIRNRYMHTVTNF). The chain crosses the membrane as a helical span at residues 83 to 103 (FIFNLAISDLLVGIFCMPITL). Residues 104–119 (LDNIIAGWPFGSSMCK) are Extracellular-facing. C118 and C206 are joined by a disulfide. The chain crosses the membrane as a helical span at residues 120–140 (ISGLVQGISVAASVFTLVAIA). At 141–160 (VDRFRCVVYPFKPKLTVKTA) the chain is on the cytoplasmic side. Residues 161–181 (FVMIVIIWGLAITIMTPSAIM) form a helical membrane-spanning segment. Over 182 to 217 (LHVQEEKYYRVRLSSHNKTSTVYWCREDWPNQEMRR) the chain is Extracellular. N198 is a glycosylation site (N-linked (GlcNAc...) asparagine). The helical transmembrane segment at 218–238 (IYTTVLFATIYLAPLSLIVIM) threads the bilayer. At 239-274 (YARIGASLFKTSAHSTGKQRLEQWHVSKKKQKVIKM) the chain is on the cytoplasmic side. Residues 275–295 (LLTVALLFILSWLPLWTLMML) form a helical membrane-spanning segment. At 296 to 310 (SDYADLSPNKLRVIN) the chain is on the extracellular side. A helical membrane pass occupies residues 311–331 (IYVYPFAHWLAFCNSSVNPII). At 332–417 (YGFFNENFRS…TGEATNSTET (86 aa)) the chain is on the cytoplasmic side. The interval 378-417 (HEPASQNPSGENLGCRKSADNPTQESLMEETGEATNSTET) is disordered.

Belongs to the G-protein coupled receptor 1 family.

The protein resides in the cell membrane. Functionally, receptor for NPAF (A-18-F-amide) and NPFF (F-8-F-amide) neuropeptides, also known as morphine-modulating peptides. Can also be activated by a variety of naturally occurring or synthetic FMRF-amide like ligands. This receptor mediates its action by association with G proteins that activate a phosphatidylinositol-calcium second messenger system. This is Neuropeptide FF receptor 2 (Npffr2) from Rattus norvegicus (Rat).